Consider the following 339-residue polypeptide: Ketol-acid reductoisomerase (NADP(+)) (339 aa).

Residues 1–182 (MRVYYDRDAD…GGGRAGIIET (182 aa)) form the KARI N-terminal Rossmann domain. NADP(+) is bound by residues 24 to 27 (YGSQ), R48, S51, and 83 to 86 (DEGQ). The active site involves H108. G134 provides a ligand contact to NADP(+). The 146-residue stretch at 183–328 (SFKEEVETDL…EKLRGMMPWI (146 aa)) folds into the KARI C-terminal knotted domain. Residues D191, E195, E227, and E231 each coordinate Mg(2+). Position 252 (S252) interacts with substrate.

This sequence belongs to the ketol-acid reductoisomerase family. It depends on Mg(2+) as a cofactor.

The enzyme catalyses (2R)-2,3-dihydroxy-3-methylbutanoate + NADP(+) = (2S)-2-acetolactate + NADPH + H(+). The catalysed reaction is (2R,3R)-2,3-dihydroxy-3-methylpentanoate + NADP(+) = (S)-2-ethyl-2-hydroxy-3-oxobutanoate + NADPH + H(+). It functions in the pathway amino-acid biosynthesis; L-isoleucine biosynthesis; L-isoleucine from 2-oxobutanoate: step 2/4. The protein operates within amino-acid biosynthesis; L-valine biosynthesis; L-valine from pyruvate: step 2/4. Its function is as follows. Involved in the biosynthesis of branched-chain amino acids (BCAA). Catalyzes an alkyl-migration followed by a ketol-acid reduction of (S)-2-acetolactate (S2AL) to yield (R)-2,3-dihydroxy-isovalerate. In the isomerase reaction, S2AL is rearranged via a Mg-dependent methyl migration to produce 3-hydroxy-3-methyl-2-ketobutyrate (HMKB). In the reductase reaction, this 2-ketoacid undergoes a metal-dependent reduction by NADPH to yield (R)-2,3-dihydroxy-isovalerate. The polypeptide is Ketol-acid reductoisomerase (NADP(+)) (Gluconacetobacter diazotrophicus (strain ATCC 49037 / DSM 5601 / CCUG 37298 / CIP 103539 / LMG 7603 / PAl5)).